A 72-amino-acid chain; its full sequence is Omega-conotoxin-like SVIA mutant 1 (72 aa).

The N-terminal stretch at 1–22 (MKLTCVVIVAVLLLTACQLITA) is a signal peptide. Positions 23–48 (EDSRGAQKHRTLRSTARRSKSELTTR) are excised as a propeptide. 3 cysteine pairs are disulfide-bonded: Cys-49–Cys-63, Cys-56–Cys-66, and Cys-62–Cys-71. The residue at position 55 (Pro-55) is a 4-hydroxyproline.

It belongs to the conotoxin O1 superfamily. As to expression, expressed by the venom duct.

Its subcellular location is the secreted. In terms of biological role, omega-conotoxins act at presynaptic membranes, they bind and block voltage-gated calcium channels (Cav). This chain is Omega-conotoxin-like SVIA mutant 1, found in Conus striatus (Striated cone).